Reading from the N-terminus, the 123-residue chain is Holo-[acyl-carrier-protein] synthase (123 aa).

Asp8 and Glu60 together coordinate Mg(2+).

Belongs to the P-Pant transferase superfamily. AcpS family. Mg(2+) is required as a cofactor.

It localises to the cytoplasm. The catalysed reaction is apo-[ACP] + CoA = holo-[ACP] + adenosine 3',5'-bisphosphate + H(+). Its function is as follows. Transfers the 4'-phosphopantetheine moiety from coenzyme A to a Ser of acyl-carrier-protein. This chain is Holo-[acyl-carrier-protein] synthase, found in Ehrlichia ruminantium (strain Gardel).